Reading from the N-terminus, the 309-residue chain is Methionyl-tRNA formyltransferase (309 aa).

109-112 (SLLP) contacts (6S)-5,6,7,8-tetrahydrofolate.

Belongs to the Fmt family.

It carries out the reaction L-methionyl-tRNA(fMet) + (6R)-10-formyltetrahydrofolate = N-formyl-L-methionyl-tRNA(fMet) + (6S)-5,6,7,8-tetrahydrofolate + H(+). Functionally, attaches a formyl group to the free amino group of methionyl-tRNA(fMet). The formyl group appears to play a dual role in the initiator identity of N-formylmethionyl-tRNA by promoting its recognition by IF2 and preventing the misappropriation of this tRNA by the elongation apparatus. The sequence is that of Methionyl-tRNA formyltransferase from Clostridium perfringens (strain SM101 / Type A).